The chain runs to 59 residues: MAHKFLIKKNKAGEFVAYFVYNSETIFWTEGYASKASAKNAIESIKKNGPEAEIDDQTD.

Belongs to the UPF0339 family.

This Caulobacter vibrioides (strain ATCC 19089 / CIP 103742 / CB 15) (Caulobacter crescentus) protein is UPF0339 protein CC_2965.